Here is an 890-residue protein sequence, read N- to C-terminus: ATP-dependent DNA helicase DDX11 (890 aa).

Residues 4 to 424 (KSGRFPFPFQ…KNLMYIKQIL (421 aa)) enclose the Helicase ATP-binding domain. ATP is bound at residue 39–46 (SPTGTGKS). Residues 71-85 (LLEGQKDSDVVKEKN) show a composition bias toward basic and acidic residues. 2 disordered regions span residues 71–95 (LLEG…EPDW) and 176–199 (EYES…DDDD). Residues Cys246, Cys264, Cys294, and Cys329 each contribute to the [4Fe-4S] cluster site. The short motif at 372–375 (DEAH) is the DEAH box element.

Belongs to the DEAD box helicase family. DEAH subfamily. DDX11/CHL1 sub-subfamily. Requires [4Fe-4S] cluster as cofactor.

Its subcellular location is the nucleus. It is found in the nucleolus. The protein localises to the cytoplasm. The protein resides in the cytoskeleton. It localises to the spindle pole. Its subcellular location is the midbody. It is found in the microtubule organizing center. The protein localises to the centrosome. The enzyme catalyses Couples ATP hydrolysis with the unwinding of duplex DNA at the replication fork by translocating in the 5'-3' direction. This creates two antiparallel DNA single strands (ssDNA). The leading ssDNA polymer is the template for DNA polymerase III holoenzyme which synthesizes a continuous strand.. The catalysed reaction is ATP + H2O = ADP + phosphate + H(+). Its function is as follows. DNA-dependent ATPase and ATP-dependent DNA helicase that participates in various functions in genomic stability, including DNA replication, DNA repair and heterochromatin organization as well as in ribosomal RNA synthesis. Plays a role in DNA double-strand break (DSB) repair at the DNA replication fork during DNA replication recovery from DNA damage. Plays a role in the regulation of sister chromatid cohesion and mitotic chromosome segregation. Stimulates 5'-single-stranded DNA flap endonuclease activity of FEN1 in an ATP- and helicase-independent manner. Also plays a role in heterochromatin organization. Involved in rRNA transcription activation through binding to active hypomethylated rDNA gene loci by recruiting UBTF and the RNA polymerase Pol I transcriptional machinery. Plays a role in embryonic development. Associates with chromatin at DNA replication fork regions. Binds to single- and double-stranded DNAs. The sequence is that of ATP-dependent DNA helicase DDX11 from Danio rerio (Zebrafish).